We begin with the raw amino-acid sequence, 213 residues long: Thymidylate kinase (213 aa).

Residue 10-17 participates in ATP binding; that stretch reads GLEGAGKT.

The protein belongs to the thymidylate kinase family.

It carries out the reaction dTMP + ATP = dTDP + ADP. Its function is as follows. Phosphorylation of dTMP to form dTDP in both de novo and salvage pathways of dTTP synthesis. This is Thymidylate kinase from Escherichia coli O81 (strain ED1a).